A 53-amino-acid polypeptide reads, in one-letter code: ATP synthase protein 8 (53 aa).

The helical transmembrane segment at 9–29 threads the bilayer; it reads WITSMLMFWISVSILFSTLWW.

It belongs to the ATPase protein 8 family. F-type ATPases have 2 components, CF(1) - the catalytic core - and CF(0) - the membrane proton channel.

The protein resides in the mitochondrion membrane. In terms of biological role, mitochondrial membrane ATP synthase (F(1)F(0) ATP synthase or Complex V) produces ATP from ADP in the presence of a proton gradient across the membrane which is generated by electron transport complexes of the respiratory chain. F-type ATPases consist of two structural domains, F(1) - containing the extramembraneous catalytic core and F(0) - containing the membrane proton channel, linked together by a central stalk and a peripheral stalk. During catalysis, ATP synthesis in the catalytic domain of F(1) is coupled via a rotary mechanism of the central stalk subunits to proton translocation. Part of the complex F(0) domain. Minor subunit located with subunit a in the membrane. The chain is ATP synthase protein 8 (MT-ATP8) from Lumbricus terrestris (Common earthworm).